We begin with the raw amino-acid sequence, 294 residues long: Cyclin-G1 (294 aa).

This sequence belongs to the cyclin family. Cyclin G subfamily. As to quaternary structure, binds to B' regulatory B subunits of protein phosphatase A (PP2A) following induction by p53 (in vitro). In terms of tissue distribution, highest levels in kidney, heart and skeletal muscle.

It localises to the nucleus. May play a role in growth regulation. Is associated with G2/M phase arrest in response to DNA damage. May be an intermediate by which p53 mediates its role as an inhibitor of cellular proliferation. The polypeptide is Cyclin-G1 (Ccng1) (Mus musculus (Mouse)).